Reading from the N-terminus, the 285-residue chain is Bis(5'-nucleosyl)-tetraphosphatase, symmetrical (285 aa).

The protein belongs to the Ap4A hydrolase family.

It carries out the reaction P(1),P(4)-bis(5'-adenosyl) tetraphosphate + H2O = 2 ADP + 2 H(+). In terms of biological role, hydrolyzes diadenosine 5',5'''-P1,P4-tetraphosphate to yield ADP. The sequence is that of Bis(5'-nucleosyl)-tetraphosphatase, symmetrical from Pseudomonas entomophila (strain L48).